The chain runs to 704 residues: MVHVNPIVKSFEYGQHTVTLETGVIARQADAAVLASMGDTTVLVTVVGKKFEEPGRDFFPLTVNYQEKTYAAGKIPGGFFKREGRPSESETLIARLIDRPIRPLFPNGFKNEVQVIITVVSVDPEINPDVISMIGTSAALAISGLPFNGPLGVARVGYTDGEYVLNPNVSQLVDSDLDLIVAGTQGAVLMVESEAAALPEEVMLGGVVYGHDQQQVVISAINELKAEASKPAWDWTAPVQDADLVAKIKDLAEAEMAAAYQIEVKQDRYTQVGVVKSAAKEALLAENPEADLREIDGLLGSLEKQVVRSRIIAGNPRIDGREPDMVRGLNVMAGVLPRTHGSALFTRGETQALVTCTLGTERDAQKVDSIMGEYTNRFMLHYNFPPYSVGETGFVGSPKRREIGHGKLAWRGINAVMPSAEEFPYSVRVVSEITESNGSSSMASVCGTSLALMDAGVPIKTSVAGIAMGLVKEGDDFVVLSDILGDEDHLGDMDFKVAGTRDGITALQMDIKIEGINKEIMQIALQQAYGARVHILNVMDQAIGEHRDDISDHAPRITTLKINPEKIRDVIGKGGATIRALTEETGTTIELEDDGTVKIASANGDATKEAIRRIEEITAEVEVGTIYNGKVVRIVDFGAFVTILPGKDGLVHISQIAEERVANVSDYLQVGQEVKVKVMEVDRQGRVRLSMKEAAPKAEAAPAE.

The Mg(2+) site is built by aspartate 488 and aspartate 494. In terms of domain architecture, KH spans 555-614 (PRITTLKINPEKIRDVIGKGGATIRALTEETGTTIELEDDGTVKIASANGDATKEAIRRI). Residues 624–692 (GTIYNGKVVR…RQGRVRLSMK (69 aa)) enclose the S1 motif domain.

Belongs to the polyribonucleotide nucleotidyltransferase family. Component of the RNA degradosome, which is a multiprotein complex involved in RNA processing and mRNA degradation. It depends on Mg(2+) as a cofactor.

The protein localises to the cytoplasm. The enzyme catalyses RNA(n+1) + phosphate = RNA(n) + a ribonucleoside 5'-diphosphate. In terms of biological role, involved in mRNA degradation. Catalyzes the phosphorolysis of single-stranded polyribonucleotides processively in the 3'- to 5'-direction. This is Polyribonucleotide nucleotidyltransferase from Shewanella sediminis (strain HAW-EB3).